The sequence spans 411 residues: Probable protein S-acyltransferase 2 (411 aa).

2 helical membrane passes run 56–76 (LTTA…VFLI) and 85–105 (SLIL…LFLT). The 51-residue stretch at 160-210 (KFCDTCLLYRPPRASHCSICNNCVQRFDHHCPWVGQCIALRNYPYFICFIS) folds into the DHHC domain. Catalysis depends on Cys190, which acts as the S-palmitoyl cysteine intermediate. Helical transmembrane passes span 205-225 (FICF…FSWV) and 245-265 (FVVL…LTVF). Ser405 is subject to Phosphoserine.

It belongs to the DHHC palmitoyltransferase family. Expressed in flowers and pollen.

It is found in the cytoplasmic vesicle membrane. It carries out the reaction L-cysteinyl-[protein] + hexadecanoyl-CoA = S-hexadecanoyl-L-cysteinyl-[protein] + CoA. In terms of biological role, palmitoyl acyltransferase. This chain is Probable protein S-acyltransferase 2 (PAT02), found in Arabidopsis thaliana (Mouse-ear cress).